Consider the following 411-residue polypeptide: Kelch domain-containing protein 10 (411 aa).

Kelch repeat units lie at residues Asn72–His133, Leu135–Gly186, Phe187–Gln239, Arg240–His288, Glu296–Pro342, and Cys345–Gln388.

The protein belongs to the KLHDC10 family. Component of a CRL2 E3 ubiquitin-protein ligase complex, also named ECS (Elongin BC-CUL2/5-SOCS-box protein) complex, composed of CUL2, Elongin BC (ELOB and ELOC), RBX1 and substrate-specific adapter KLHDC10.

It functions in the pathway protein modification; protein ubiquitination. Substrate-recognition component of a Cul2-RING (CRL2) E3 ubiquitin-protein ligase complex of the DesCEND (destruction via C-end degrons) pathway, which recognizes a C-degron located at the extreme C terminus of target proteins, leading to their ubiquitination and degradation. The C-degron recognized by the DesCEND pathway is usually a motif of less than ten residues and can be present in full-length proteins, truncated proteins or proteolytically cleaved forms. The CRL2(KLHDC10) complex specifically recognizes proteins with a proline-glycine (Pro-Gly) or an alanine tail (CAT tail) at the C-terminus, leading to their ubiquitination and degradation. The CRL2(KLHDC10) complex is involved in the ribosome-associated quality control (RQC) pathway, which mediates the extraction of incompletely synthesized nascent chains from stalled ribosomes: CRL2(KLHDC10) acts downstream of NEMF and recognizes CAT tails associated with stalled nascent chains, leading to their ubiquitination and degradation. This Xenopus laevis (African clawed frog) protein is Kelch domain-containing protein 10.